Consider the following 244-residue polypeptide: DNA repair protein RecO (244 aa).

This sequence belongs to the RecO family.

Involved in DNA repair and RecF pathway recombination. This Nocardioides sp. (strain ATCC BAA-499 / JS614) protein is DNA repair protein RecO.